A 620-amino-acid polypeptide reads, in one-letter code: Delta(14)-sterol reductase LBR (620 aa).

Positions 1-62 (MPGRKFADGE…DIKPLKSFKQ (62 aa)) constitute a Tudor domain. Over 1 to 215 (MPGRKFADGE…TPQRRDLEFG (215 aa)) the chain is Nuclear. The segment at 52–111 (SDIKPLKSFKQRKSGSTSSSPSRRRSSRSRSRSRSRSPGRAPKGSRRSVSASYQADAKEK) is disordered. N6-acetyllysine is present on K55. Phosphoserine is present on residues S59 and S67. Phosphoserine; by CDK1 occurs at positions 71 and 86. The segment covering 73–88 (SRRRSSRSRSRSRSRS) has biased composition (basic residues). Residue S88 is modified to Phosphoserine. O-linked (GlcNAc) serine glycosylation occurs at S96. S99 and S101 each carry phosphoserine. T123 is subject to Phosphothreonine. At S133 the chain carries Phosphoserine. Position 205 is a phosphothreonine (T205). 8 consecutive transmembrane segments (helical) span residues 216–236 (GVPGALLIMLGLPACVFLLLL), 263–283 (VCGVYLLWFFLQALFSLLPVG), 304–324 (LYAFILTSAAVGTAVFWDIEL), 331–351 (FLQFALAAIVFSVVLSVYLYA), 452–472 (IIHDGFGFMLAFGDLVWVPFT), 486–506 (DLSWPLTSVIIALKLCGYVIF), 525–547 (LAHLKTIPTSTWKSLLVSGWWGF), and 566–586 (PCGFNHILPYFYVIYFTALLI). Residues K599 and K606 each carry the N6-acetyllysine modification.

Belongs to the ERG4/ERG24 family. In terms of assembly, interacts with CBX5. Interacts with DNA. Interaction with DNA is sequence independent with higher affinity for supercoiled and relaxed circular DNA than linear DNA. Interacts with lamin B. Interacts with CLNK. Interacts with TMEM147; promoting LBR localization to the nucleus inner membrane. Phosphorylated by CDK1 in mitosis when the inner nuclear membrane breaks down into vesicles that dissociate from the lamina and the chromatin. It is phosphorylated by different protein kinases in interphase when the membrane is associated with these structures. Phosphorylation of LBR and HP1 proteins may be responsible for some of the alterations in chromatin organization and nuclear structure which occur at various times during the cell cycle. Phosphorylated by SRPK1. In late anaphase LBR is dephosphorylated, probably by PP1 and/or PP2A, allowing reassociation with chromatin.

It localises to the nucleus inner membrane. The protein resides in the nucleus. Its subcellular location is the cytoplasm. The protein localises to the endoplasmic reticulum membrane. The enzyme catalyses 5alpha-cholest-8,14-dien-3beta-ol + NADPH + H(+) = 5alpha-cholest-8-en-3beta-ol + NADP(+). The catalysed reaction is 4,4-dimethyl-5alpha-cholesta-8,24-dien-3beta-ol + NADP(+) = 4,4-dimethyl-5alpha-cholesta-8,14,24-trien-3beta-ol + NADPH + H(+). It catalyses the reaction 4,4-dimethyl-8,14-cholestadien-3beta-ol + NADPH + H(+) = 4,4-dimethyl-5alpha-cholest-8-en-3beta-ol + NADP(+). It participates in steroid biosynthesis; cholesterol biosynthesis. Catalyzes the reduction of the C14-unsaturated bond of lanosterol, as part of the metabolic pathway leading to cholesterol biosynthesis. Plays a critical role in myeloid cell cholesterol biosynthesis which is essential to both myeloid cell growth and functional maturation. Mediates the activation of NADPH oxidases, perhaps by maintaining critical levels of cholesterol required for membrane lipid raft formation during neutrophil differentiation. Anchors the lamina and the heterochromatin to the inner nuclear membrane. This Rattus norvegicus (Rat) protein is Delta(14)-sterol reductase LBR (Lbr).